The chain runs to 747 residues: Ferrichrome outer membrane transporter/phage receptor (747 aa).

An N-terminal signal peptide occupies residues 1 to 33 (MARSKTAQPKHSLRKIAVVVATAVSGMSVYAQA). Residues 34–192 (AVEPKEDTIT…NMVSKRPTTE (159 aa)) are Periplasmic-facing. The short motif at 40 to 47 (DTITVTAA) is the TonB box element. A TBDR plug domain is found at 75-187 (PIQKVPQSIS…PGGLLNMVSK (113 aa)). Residues R114, Q133, and 148 to 149 (FY) each bind ferrichrome. The region spanning 192-747 (EPLKEVQFKA…QVVATATFRF (556 aa)) is the TBDR beta-barrel domain. A beta stranded transmembrane segment spans residues 193–201 (PLKEVQFKA). Over 202 to 206 (GTDSL) the chain is Extracellular. Residues 207 to 215 (FQTGFDFSD) form a beta stranded membrane-spanning segment. Topologically, residues 216 to 222 (SLDDDGV) are periplasmic. A beta stranded membrane pass occupies residues 223-231 (YSYRLTGLA). At 232 to 245 (RSANAQQKGSEEQR) the chain is on the extracellular side. Residues 246-255 (YAIAPAFTWR) form a beta stranded membrane-spanning segment. Residues 256-259 (PDDK) are Periplasmic-facing. A beta stranded membrane pass occupies residues 260-268 (TNFTFLSYF). Residues 269–312 (QNEPETGYYGWLPKEGTVEPLPNGKRLPTDFNEGAKNNTYSRNE) lie on the Extracellular side of the membrane. A ferrichrome-binding site is contributed by 277–279 (YGW). A beta stranded transmembrane segment spans residues 313-321 (KMVGYSFDH). Over 322 to 326 (EFNDT) the chain is Periplasmic. The beta stranded transmembrane segment at 327 to 335 (FTVRQNLRF) threads the bilayer. Residues 336-387 (AENKTSQNSVYGYGVCSDPANAYSKQCAALAPADKGHYLARKYVVDDEKLQN) lie on the Extracellular side of the membrane. Position 346–348 (346–348 (YGY)) interacts with ferrichrome. C351 and C362 are disulfide-bonded. Residues 388 to 396 (FSVDTQLQS) form a beta stranded membrane-spanning segment. The Periplasmic portion of the chain corresponds to 397–404 (KFATGDID). The beta stranded transmembrane segment at 405 to 413 (HTLLTGVDF) threads the bilayer. The Extracellular portion of the chain corresponds to 414 to 464 (MRMRNDINAWFGYDDSVPLLNLYNPVNTDFDFNAKDPANSGPYRILNKQKQ). F424 contacts ferrichrome. A beta stranded membrane pass occupies residues 465–473 (TGVYVQDQA). The Periplasmic segment spans residues 474 to 477 (QWDK). The chain crosses the membrane as a beta stranded span at residues 478-486 (VLVTLGGRY). The Extracellular portion of the chain corresponds to 487-508 (DWADQESLNRVAGTTDKRDDKQ). A beta stranded membrane pass occupies residues 509–517 (FTWRGGVNY). The Periplasmic segment spans residues 518-522 (LFDNG). A beta stranded membrane pass occupies residues 523–531 (VTPYFSYSE). The Extracellular portion of the chain corresponds to 532–551 (SFEPSSQVGKDGNIFAPSKG). A beta stranded membrane pass occupies residues 552–560 (KQYEVGVKY). The Periplasmic portion of the chain corresponds to 561–565 (VPEDR). A beta stranded transmembrane segment spans residues 566–574 (PIVVTGAVY). Topologically, residues 575 to 601 (NLTKTNNLMADPEGSFFSVEGGEIRAR) are extracellular. The chain crosses the membrane as a beta stranded span at residues 602-610 (GVEIEAKAA). At 611-613 (LSA) the chain is on the periplasmic side. The beta stranded transmembrane segment at 614-622 (SVNVVGSYT) threads the bilayer. Residues 623 to 645 (YTDAEYTTDTTYKGNTPAQVPKH) lie on the Extracellular side of the membrane. A beta stranded transmembrane segment spans residues 646 to 654 (MASLWADYT). At 655 to 661 (FFDGPLS) the chain is on the periplasmic side. A beta stranded membrane pass occupies residues 662–670 (GLTLGTGGR). Residues 671–689 (YTGSSYGDPANSFKVGSYT) are Extracellular-facing. A beta stranded transmembrane segment spans residues 690 to 698 (VVDALVRYD). Residues 699 to 705 (LARVGMA) lie on the Periplasmic side of the membrane. A beta stranded transmembrane segment spans residues 706-714 (GSNVALHVN). Residues 715–737 (NLFDREYVASCFNTYGCFWGAER) lie on the Extracellular side of the membrane. C725 and C731 are disulfide-bonded. Residues 730–747 (GCFWGAERQVVATATFRF) carry the TonB C-terminal box motif. A735 is a ferrichrome binding site. Residues 738 to 746 (QVVATATFR) form a beta stranded membrane-spanning segment. A topological domain (periplasmic) is located at residue F747.

The protein belongs to the TonB-dependent receptor family. Monomer. Interacts with TonB. Interacts with Escherichia phage T5 receptor-binding protein pb5 (RBP-pb5); this interaction is necessary for the entry of the viral genome into the host cell.

Its subcellular location is the cell outer membrane. Binding of ferrichrome or colicin M enhances the interaction between FhuA and TonB. TonB activates FhuA through interaction with the beta-barrel. Involved in the uptake of iron in complex with ferrichrome, a hydroxamate-type siderophore. Binds and transports ferrichrome-iron across the outer membrane. In addition to its role in ferrichrome-iron transport, transports the antibiotic albomycin, which is a structural analog of ferrichrome, and acts as a receptor for colicin M, microcin J25 and bacteriophages T1, T5, phi80 and UC-1. The energy source, which is required for all FhuA functions except infection by phage T5, is provided by the inner membrane TonB system. This chain is Ferrichrome outer membrane transporter/phage receptor, found in Escherichia coli (strain K12).